The chain runs to 469 residues: Bifunctional protein GlmU (469 aa).

The tract at residues Met1–Arg237 is pyrophosphorylase. Residues Leu12 to Gly15, Lys26, Gln78, Gly83 to Thr84, Ser105 to Asp107, Gly144, Glu162, Asn177, and Asn235 each bind UDP-N-acetyl-alpha-D-glucosamine. A Mg(2+)-binding site is contributed by Asp107. Asn235 is a Mg(2+) binding site. The segment at Gln238–Ala258 is linker. The interval Gly259–Lys469 is N-acetyltransferase. Positions 341 and 359 each coordinate UDP-N-acetyl-alpha-D-glucosamine. His371 serves as the catalytic Proton acceptor. Positions 374 and 385 each coordinate UDP-N-acetyl-alpha-D-glucosamine. Acetyl-CoA is bound by residues Ala388, Asn394–Tyr395, Ser413, Ala431, and Arg448.

The protein in the N-terminal section; belongs to the N-acetylglucosamine-1-phosphate uridyltransferase family. In the C-terminal section; belongs to the transferase hexapeptide repeat family. In terms of assembly, homotrimer. It depends on Mg(2+) as a cofactor.

The protein resides in the cytoplasm. The enzyme catalyses alpha-D-glucosamine 1-phosphate + acetyl-CoA = N-acetyl-alpha-D-glucosamine 1-phosphate + CoA + H(+). It catalyses the reaction N-acetyl-alpha-D-glucosamine 1-phosphate + UTP + H(+) = UDP-N-acetyl-alpha-D-glucosamine + diphosphate. The protein operates within nucleotide-sugar biosynthesis; UDP-N-acetyl-alpha-D-glucosamine biosynthesis; N-acetyl-alpha-D-glucosamine 1-phosphate from alpha-D-glucosamine 6-phosphate (route II): step 2/2. It participates in nucleotide-sugar biosynthesis; UDP-N-acetyl-alpha-D-glucosamine biosynthesis; UDP-N-acetyl-alpha-D-glucosamine from N-acetyl-alpha-D-glucosamine 1-phosphate: step 1/1. Its pathway is bacterial outer membrane biogenesis; LPS lipid A biosynthesis. Functionally, catalyzes the last two sequential reactions in the de novo biosynthetic pathway for UDP-N-acetylglucosamine (UDP-GlcNAc). The C-terminal domain catalyzes the transfer of acetyl group from acetyl coenzyme A to glucosamine-1-phosphate (GlcN-1-P) to produce N-acetylglucosamine-1-phosphate (GlcNAc-1-P), which is converted into UDP-GlcNAc by the transfer of uridine 5-monophosphate (from uridine 5-triphosphate), a reaction catalyzed by the N-terminal domain. In Koribacter versatilis (strain Ellin345), this protein is Bifunctional protein GlmU.